A 61-amino-acid polypeptide reads, in one-letter code: Small ribosomal subunit protein uS14 (61 aa).

Zn(2+) contacts are provided by Cys-24, Cys-27, Cys-40, and Cys-43.

This sequence belongs to the universal ribosomal protein uS14 family. Zinc-binding uS14 subfamily. As to quaternary structure, part of the 30S ribosomal subunit. Contacts proteins S3 and S10. Zn(2+) is required as a cofactor.

Functionally, binds 16S rRNA, required for the assembly of 30S particles and may also be responsible for determining the conformation of the 16S rRNA at the A site. The protein is Small ribosomal subunit protein uS14 of Mycoplasma genitalium (strain ATCC 33530 / DSM 19775 / NCTC 10195 / G37) (Mycoplasmoides genitalium).